The chain runs to 242 residues: MSKIWILLLLVGAVQFARGFPALEEEQEDDVIDWPSFEYDLSDEERGKGLDWLKKQWGKLKNSFKKVGAKVTATFNKGRDYLKKKGIKVDPLNCQGNKCRSCVIFTLKPKKFCIEYVFSTSAITVSLIKEKDDEEKVLLGPFTIKTGNIPKCCKLGSFIGELCLQGVEGRLKSSNGKPHVNLCVGLLLKKFGCGAKICVSYVDGKFSVSFKPKLFAGDEENGTIMEAGEKEDEGKVIDAVPE.

A signal peptide spans 1–19; sequence MSKIWILLLLVGAVQFARG. A propeptide spanning residues 20–46 is cleaved from the precursor; sequence FPALEEEQEDDVIDWPSFEYDLSDEER.

The protein belongs to the redulysin-like family. Contains 5 disulfide bonds. In terms of tissue distribution, expressed by the venom gland (posterior main gland) (at protein level).

Its subcellular location is the secreted. Highly abundant protein that may be responsible for the observed disruption of sensory neuron membranes, since it is homologous to proteins such as trialysin, which forms pores in lipid bilayers. Probable insecticidal toxin. This is Venom redulysin 2 from Platymeris rhadamanthus (Red spot assassin bug).